A 225-amino-acid polypeptide reads, in one-letter code: MSARVGVITFPGTLDDVDAARAVTLAGGEAVSLWHGDADLKGVDAVIVPGGFSYGDYLRCGAIARFAPVMGKVVQAAQGGMPVLGICNGFQVLCEAGLLPGALTRNEGLHFICRDEWLKVEATSTAWTSRYESGAEILVPLKSGEGRYQASENVLDELEGEGRVVFRYVGDNPNGSQRGIAGISSANGRVVGLMPHPEHATEALTGPSDDGLGMFYSVLDSVISA.

The Glutamine amidotransferase type-1 domain occupies 4–225 (RVGVITFPGT…YSVLDSVISA (222 aa)). Catalysis depends on Cys87, which acts as the Nucleophile. Catalysis depends on residues His196 and Glu198.

Part of the FGAM synthase complex composed of 1 PurL, 1 PurQ and 2 PurS subunits.

It is found in the cytoplasm. It catalyses the reaction N(2)-formyl-N(1)-(5-phospho-beta-D-ribosyl)glycinamide + L-glutamine + ATP + H2O = 2-formamido-N(1)-(5-O-phospho-beta-D-ribosyl)acetamidine + L-glutamate + ADP + phosphate + H(+). The enzyme catalyses L-glutamine + H2O = L-glutamate + NH4(+). It participates in purine metabolism; IMP biosynthesis via de novo pathway; 5-amino-1-(5-phospho-D-ribosyl)imidazole from N(2)-formyl-N(1)-(5-phospho-D-ribosyl)glycinamide: step 1/2. In terms of biological role, part of the phosphoribosylformylglycinamidine synthase complex involved in the purines biosynthetic pathway. Catalyzes the ATP-dependent conversion of formylglycinamide ribonucleotide (FGAR) and glutamine to yield formylglycinamidine ribonucleotide (FGAM) and glutamate. The FGAM synthase complex is composed of three subunits. PurQ produces an ammonia molecule by converting glutamine to glutamate. PurL transfers the ammonia molecule to FGAR to form FGAM in an ATP-dependent manner. PurS interacts with PurQ and PurL and is thought to assist in the transfer of the ammonia molecule from PurQ to PurL. In Rhodococcus jostii (strain RHA1), this protein is Phosphoribosylformylglycinamidine synthase subunit PurQ.